The primary structure comprises 203 residues: Akirin-2 (203 aa).

A phosphoserine mark is found at serine 18 and serine 21. A Nuclear localization signal motif is present at residues 22–27 (PKRRRC). Serine 57 carries the post-translational modification Phosphoserine. The tract at residues 115-137 (PHAFLLSGPASPGTPSGTSSPLK) is disordered. The span at 119–135 (LLSGPASPGTPSGTSSP) shows a compositional bias: low complexity. Positions 200–203 (SYVS) match the SYVS motif motif.

This sequence belongs to the akirin family. In terms of assembly, homodimer. Interacts with IPO9; the interaction is direct. Associates with 20S and 26S proteasomes. Interacts with SMARCD1; promoting SWI/SNF complex recruitment. Interacts with NFKBIZ. Interacts with YWHAB. Post-translationally, polyubiquitinated. Polyubiquitination is dependent of UBR5 that extends pre-ubiquitinated AKIRIN2.

It localises to the nucleus. Its subcellular location is the cytoplasm. The protein resides in the membrane. Its function is as follows. Molecular adapter that acts as a bridge between a variety of multiprotein complexes, and which is involved in embryonic development, immunity, myogenesis and brain development. Plays a key role in nuclear protein degradation by promoting import of proteasomes into the nucleus: directly binds to fully assembled 20S proteasomes at one end and to nuclear import receptor IPO9 at the other end, bridging them together and mediating the import of pre-assembled proteasome complexes through the nuclear pore. Involved in innate immunity by regulating the production of interleukin-6 (IL6) downstream of Toll-like receptor (TLR): acts by bridging the NF-kappa-B inhibitor NFKBIZ and the SWI/SNF complex, leading to promote induction of IL6. Also involved in adaptive immunity by promoting B-cell activation. Involved in brain development: required for the survival and proliferation of cerebral cortical progenitor cells. Involved in myogenesis: required for skeletal muscle formation and skeletal development, possibly by regulating expression of muscle differentiation factors. In Bos taurus (Bovine), this protein is Akirin-2.